Reading from the N-terminus, the 7180-residue chain is Replicase polyprotein 1ab (7180 aa).

One can recognise a CoV Nsp1 globular domain in the interval 54–196; sequence LVNHVRVDCS…PWSILLRKGG (143 aa). The region spanning 217 to 247 is the BetaCoV Nsp1 C-terminal domain; it reads FNVEDACEEVHLNPRGKYSCKAYALLRGYRG. The 263-residue stretch at 251 to 513 folds into the CoV Nsp2 N-terminal domain; that stretch reads ILFVDQYGCD…AICRFLYMDY (263 aa). Zn(2+)-binding residues include C390, C395, C411, and C414. The segment at 390 to 414 is C4; it reads CCGDTCGFRGWVPGNMMDGFPCPGC. A CoV Nsp2 middle domain is found at 518 to 706; sequence CGNLEQRAIL…VDKFKTFFKV (189 aa). A CoV Nsp2 C-terminal domain is found at 726-832; that stretch reads SNRVCLAGSK…LDQCWRFPCA (107 aa). The Ubiquitin-like 1 domain maps to 834 to 946; that stretch reads KKVVFNDKPK…MYCSFSAPDE (113 aa). The 238-residue stretch at 1083 to 1320 folds into the Peptidase C16 1 domain; that stretch reads AFDAIYSETL…IAQLYGSCIT (238 aa). The active-site For PL1-PRO activity is the C1120. 4 residues coordinate Zn(2+): C1197, C1200, C1223, and C1225. Residues 1197–1225 form a C4-type 1 zinc finger; it reads CLKCGMELKLQGLDAVFFYGDVVSHMCKC. Active-site for PL1-PRO activity residues include H1271 and D1282. The 161-residue stretch at 1321 to 1481 folds into the Macro domain; sequence PNVCFVKGDV…VIEKCQVTSV (161 aa). The DPUP domain maps to 1536 to 1608; sequence DDARVFVQAN…VSQIRALLAN (73 aa). The 56-residue stretch at 1607–1662 folds into the Ubiquitin-like 2 domain; the sequence is ANKVDVLCTVDGVNFRSCCVAEGEVFGKTLGSVFCDGINVTKVRCSAIHKGKVFFQ. The Peptidase C16 2 domain maps to 1677–1936; sequence AFGFDEPQLL…CVAYKPDLSQ (260 aa). Catalysis depends on C1715, which acts as the For PL2-PRO activity. Zn(2+) contacts are provided by C1793, C1795, C1827, and C1829. The C4-type 2 zinc-finger motif lies at 1793-1829; it reads CKCGVKQEQRKGVDAVMHFGTLDKSGLVKGYNIACTC. Residues H1872 and D1886 each act as for PL2-PRO activity in the active site. The 102-residue stretch at 1950–2051 folds into the Nucleic acid-binding domain; it reads IKAQFRTFEK…TYFNRPSVVC (102 aa). Positions 2106 to 2259 constitute a G2M domain; it reads SVEDQIVMEA…TDNKVIYTTE (154 aa). 3 consecutive transmembrane segments (helical) span residues 2228 to 2248, 2289 to 2309, and 2320 to 2340; these read AIACYGAVKWFLLYCFSWIKF, FFLVATVFLLWFNFLYANVIL, and LPMFVGQIVAWVKTTFGVLTI. Residues 2228–2465 are HD1; it reads AIACYGAVKW…FTLLRFYIVV (238 aa). Residues 2325–2386 form the 3Ecto domain; it reads GQIVAWVKTT…SINVVQHVVD (62 aa). Intrachain disulfides connect C2341-C2365 and C2356-C2362. 2 helical membrane-spanning segments follow: residues 2403–2423 and 2445–2465; these read LVIGYSLYTVCFYPLFVLVGM and LFVFVANMLPAFTLLRFYIVV. Positions 2473-2563 are Y1; the sequence is CLCRHVMYGC…ELKRPVNPTD (91 aa). The region spanning 2473-2840 is the CoV Nsp3 Y domain; sequence CLCRHVMYGC…LTTPFSLKGG (368 aa). Zn(2+)-binding residues include H2477, C2482, C2487, C2490, C2523, H2526, C2530, and C2533. The segment at 2477 to 2490 is ZF1; sequence HVMYGCSKPGCLFC. Residues 2523–2533 are ZF2; that stretch reads CTKHQWNCLNC. The interval 2564–2656 is Y2; the sequence is SAYYSVIEVK…MVEKKLITTA (93 aa). The tract at residues 2564 to 2840 is coV-Y; sequence SAYYSVIEVK…LTTPFSLKGG (277 aa). Residues 2657 to 2739 are Y3; sequence NTGLSVSRTM…KSVMAAVNAG (83 aa). Residues 2740 to 2840 are Y4; it reads VEVTDESCNN…LTTPFSLKGG (101 aa). The next 6 membrane-spanning stretches (helical) occupy residues 2846–2866, 3099–3119, 3121–3141, 3153–3173, 3180–3200, and 3205–3225; these read VLQWLFVANLICFIVLWALMP, AFDLIHQVLGGLVQPIDFFAL, ASSVAGAILAIIVVLAFYYLI, VVVINVIVWCINFLMLFVFQV, LYACFYFYTTLYFPSEISVVM, and LVMYGAIMPLWFCITYVAVVV. Residues 2846–3225 form an HD2 region; that stretch reads VLQWLFVANL…FCITYVAVVV (380 aa). One can recognise a Nsp4C domain in the interval 3239 to 3336; that stretch reads IGTDVRSDGT…TASVTTSFLQ (98 aa). A Peptidase C30 domain is found at 3337–3639; the sequence is SGIVKMVSPT…YQQLAGVKLQ (303 aa). Active-site for 3CL-PRO activity residues include H3377 and C3481. A run of 7 helical transmembrane segments spans residues 3648 to 3668, 3678 to 3698, 3705 to 3725, 3748 to 3768, 3775 to 3795, 3802 to 3822, and 3846 to 3866; these read GTCCWILASTFLFCSIISAFV, THMLGVTLCALCFVIFAMLLI, LTMYIMPVLCTLFYTNYLVVG, TYMDEVLYGVVLLVAMVFVTM, VFSTMFLVGRLVSLVSMWYFG, VLLFLTSLFGTYTWTTMLSLA, and LVLLSYLCIGYVCCCYWGVLS. The interval 3648 to 3866 is HD3; it reads GTCCWILAST…VCCCYWGVLS (219 aa). In terms of domain architecture, RdRp Nsp7 cofactor spans 3928 to 4016; it reads SRLTDVKCAN…DYVRDNTVLQ (89 aa). Residues 4017 to 4213 form the RdRp Nsp8 cofactor domain; it reads ALQSEFVNMA…HNEVSTVVLQ (197 aa). The region spanning 4214–4323 is the Nsp9 ssRNA-binding domain; that stretch reads NNELMPQKLR…GTLSSTVRLQ (110 aa). One can recognise an ExoN/MTase coactivator domain in the interval 4324 to 4461; that stretch reads AGTATEYASN…CVGTGSQFQS (138 aa). The Zn(2+) site is built by C4397, C4400, H4406, C4413, C4439, C4442, C4450, and C4452. Zinc fingers lie at residues 4397-4413 and 4439-4452; these read CIYCRSRVEHPDVDGLC and CQVCGFWRDGSCSC. Residues 4466–4721 enclose the NiRAN domain; that stretch reads FLNRVRGTSV…DSELFVNGTY (256 aa). 2 residues coordinate Mn(2+): N4669 and D4678. The region spanning 4722–4820 is the Nsp12 Interface domain; sequence REFDLVQYDF…MNMDVDTHRY (99 aa). The Zn(2+) site is built by H4751, C4757, C4762, C4766, and C4943. A Nsp12 RNA-dependent RNA polymerase domain is found at 4821 to 5388; the sequence is RLSLKDLLLY…NMYLRSAVMQ (568 aa). The rdRp Fingers N-ter stretch occupies residues 4823-5037; it reads SLKDLLLYAA…HQKCLKSIAA (215 aa). A rdRp Palm N-ter region spans residues 5038 to 5076; sequence TRGVPVVIGTTKFYGGWDDMLRRLIKDVDSPVLMGWDYP. Positions 5068–5230 constitute a RdRp catalytic domain; that stretch reads PVLMGWDYPK…CYNSEFASKG (163 aa). The segment at 5077–5135 is rdRp Fingers C-ter; the sequence is KCDRAMPNILRIVSSLVLARKHDSCCSHTDRFYRLANECAQVLGEIVMCGGCYYVKPGG. Residues H5098, C5101, and C5102 each contribute to the Zn(2+) site. The rdRp Palm C-ter stretch occupies residues 5136 to 5271; it reads TSSGDATTAF…EKGPHEFCSQ (136 aa). Active-site residues include S5215, D5216, and D5217. A rdRp Thumb region spans residues 5272–5388; it reads HTMLVKMDGD…NMYLRSAVMQ (117 aa). The region spanning 5389–5501 is the CV ZBD domain; sequence SVGACVVCSS…EDFNKIASCK (113 aa). Residues C5393, C5396, C5404, C5407, C5414, C5417, H5421, H5427, C5438, C5443, C5460, and H5463 each contribute to the Zn(2+) site. The (+)RNA virus helicase ATP-binding domain occupies 5644-5825; that stretch reads SVPETFQNNV…MCCLGPDIFL (182 aa). 5669–5676 provides a ligand contact to ATP; it reads GPPGTGKS. The (+)RNA virus helicase C-terminal domain occupies 5826-6003; that stretch reads GTCYRCPKEI…FKDCSKSYVG (178 aa). The 216-residue stretch at 6057 to 6272 folds into the ExoN domain; sequence LFITRDEAIK…RCLAVHDCFC (216 aa). Catalysis depends on residues D6075, E6077, and E6176. Residues C6192, C6195, C6211, H6214, H6242, C6246, and H6249 each contribute to the Zn(2+) site. Active-site residues include H6253 and D6258. Position 6264 (C6264) interacts with Zn(2+). The 227-residue stretch at 6281 to 6507 folds into the N7-MTase domain; the sequence is YPIISNEVSV…NLWNTFTRLQ (227 aa). 6316–6322 serves as a coordination point for S-adenosyl-L-methionine; the sequence is DIGNPKG. A gpppA-binding region spans residues 6394–6408; that stretch reads CNGGSLYVNKHAFHT. C6432, C6453, C6464, and H6467 together coordinate Zn(2+). A Nsp15 N-terminal oligomerization domain is found at 6508–6568; the sequence is SLENVVYNLV…NVAVELFAER (61 aa). Residues 6569 to 6689 enclose the AV-Nsp11N/CoV-Nsp15M domain; it reads SIRPHPELKL…FAMRRDGDDV (121 aa). The region spanning 6739–6878 is the NendoU domain; sequence SPRSEMEKDF…NEEKVMTFYP (140 aa). One can recognise a Nidovirus-type SAM-dependent 2'-O-MTase domain in the interval 6883–7177; it reads AADWKPGYVM…KEVFVGDSLV (295 aa). Residues K6927, D7011, K7051, and E7084 contribute to the active site.

It belongs to the coronaviruses polyprotein 1ab family. In terms of assembly, interacts with host PHB and PHB2. As to quaternary structure, interacts with papain-like protease nsp3 and non-structural protein 6. Monomer. Homodimer. Only the homodimer shows catalytic activity. In terms of assembly, interacts with nsp8 and nsp12 to form the replication-transcription complex (RTC): nsp12, nsp7, two subunits of nsp8, and up to two subunits of nsp13. As to quaternary structure, interacts with nsp7, nsp13 and nsp12 to form the replication-transcription complex (RTC): nsp12, nsp7, two subunits of nsp8, and up to two subunits of nsp13. Interacts with nsp12. In terms of assembly, interacts with proofreading exoribonuclease nsp14 and 2'-O-methyltransferase nsp16; these interactions enhance nsp14 and nsp16 enzymatic activities. As to quaternary structure, interacts with nsp7 and nsp8 to form the replication-transcription complex (RTC): nsp12, nsp7, two subunits of nsp8, and up to two subunits of nsp13. Interacts with nsp9. Interacts with nsp8 to form the replication-transcription complex (RTC): nsp12, nsp7, two subunits of nsp8, and up to two subunits of nsp13. The cofactor is Mn(2+). Requires Mg(2+) as cofactor. In terms of processing, specific enzymatic cleavages in vivo by its own proteases yield mature proteins. 3CL-PRO and PL-PRO proteinases are autocatalytically processed.

It is found in the host membrane. It localises to the host cytoplasm. The protein resides in the host perinuclear region. The protein localises to the host endoplasmic reticulum-Golgi intermediate compartment. The catalysed reaction is RNA(n) + a ribonucleoside 5'-triphosphate = RNA(n+1) + diphosphate. The enzyme catalyses ATP + H2O = ADP + phosphate + H(+). It carries out the reaction Thiol-dependent hydrolysis of ester, thioester, amide, peptide and isopeptide bonds formed by the C-terminal Gly of ubiquitin (a 76-residue protein attached to proteins as an intracellular targeting signal).. It catalyses the reaction a 5'-end (N(7)-methyl 5'-triphosphoguanosine)-ribonucleoside in mRNA + S-adenosyl-L-methionine = a 5'-end (N(7)-methyl 5'-triphosphoguanosine)-(2'-O-methyl-ribonucleoside) in mRNA + S-adenosyl-L-homocysteine + H(+). The catalysed reaction is uridylyl-uridylyl-ribonucleotide-RNA = a 3'-end uridylyl-2',3'-cyclophospho-uridine-RNA + a 5'-end dephospho-ribonucleoside-RNA. The enzyme catalyses a 5'-end diphospho-ribonucleoside in mRNA + GTP + H(+) = a 5'-end (5'-triphosphoguanosine)-ribonucleoside in mRNA + diphosphate. It carries out the reaction a 5'-end (5'-triphosphoguanosine)-ribonucleoside in mRNA + S-adenosyl-L-methionine = a 5'-end (N(7)-methyl 5'-triphosphoguanosine)-ribonucleoside in mRNA + S-adenosyl-L-homocysteine. Its function is as follows. The replicase polyprotein of coronaviruses is a multifunctional protein: it contains the activities necessary for the transcription of negative stranded RNA, leader RNA, subgenomic mRNAs and progeny virion RNA as well as proteinases responsible for the cleavage of the polyprotein into functional products. In terms of biological role, inhibits host translation by interacting with the 40S ribosomal subunit. The nsp1-40S ribosome complex further induces an endonucleolytic cleavage near the 5'UTR of host mRNAs, targeting them for degradation. Viral mRNAs are not susceptible to nsp1-mediated endonucleolytic RNA cleavage thanks to the presence of a 5'-end leader sequence and are therefore protected from degradation. By suppressing host gene expression, nsp1 facilitates efficient viral gene expression in infected cells and evasion from host immune response. Functionally, may play a role in the modulation of host cell survival signaling pathway by interacting with host PHB and PHB2. Indeed, these two proteins play a role in maintaining the functional integrity of the mitochondria and protecting cells from various stresses. Responsible for the cleavages located at the N-terminus of the replicase polyprotein. In addition, PL-PRO possesses a deubiquitinating/deISGylating activity and processes both 'Lys-48'- and 'Lys-63'-linked polyubiquitin chains from cellular substrates. Participates together with nsp4 in the assembly of virally-induced cytoplasmic double-membrane vesicles necessary for viral replication. Antagonizes innate immune induction of type I interferon by blocking the phosphorylation, dimerization and subsequent nuclear translocation of host IRF3. Also prevents host NF-kappa-B signaling. Its function is as follows. Participates in the assembly of virally-induced cytoplasmic double-membrane vesicles necessary for viral replication. In terms of biological role, cleaves the C-terminus of replicase polyprotein at 11 sites. Recognizes substrates containing the core sequence [ILMVF]-Q-|-[SGACN]. Also able to bind an ADP-ribose-1''-phosphate (ADRP). Functionally, plays a role in the initial induction of autophagosomes from host endoplasmic reticulum. Later, limits the expansion of these phagosomes that are no longer able to deliver viral components to lysosomes. Forms a hexadecamer with nsp8 (8 subunits of each) that may participate in viral replication by acting as a primase. Alternatively, may synthesize substantially longer products than oligonucleotide primers. Its function is as follows. Forms a hexadecamer with nsp7 (8 subunits of each) that may participate in viral replication by acting as a primase. Alternatively, may synthesize substantially longer products than oligonucleotide primers. In terms of biological role, forms a primer, NSP9-pU, which is utilized by the polymerase for the initiation of RNA chains. Interacts with ribosome signal recognition particle RNA (SRP). Together with NSP8, suppress protein integration into the cell membrane, thereby disrupting host immune defenses. Functionally, plays a pivotal role in viral transcription by stimulating both nsp14 3'-5' exoribonuclease and nsp16 2'-O-methyltransferase activities. Therefore plays an essential role in viral mRNAs cap methylation. RNA-directed RNA polymerase that catalyzes the transcription of viral genomic and subgenomic RNAs. Acts in complex with nsp7 and nsp8 to transcribe both the minus and positive strands of genomic RNA. The kinase-like NiRAN domain of NSP12 attaches one or more nucleotides to the amino terminus of NSP9, forming a covalent RNA-protein intermediate that serves as transcription/replication primer. Subgenomic RNAs (sgRNAs) are formed by discontinuous transcription: The polymerase has the ability to pause at transcription-regulating sequences (TRS) and jump to the leader TRS, resulting in a major deletion. This creates a series of subgenomic RNAs that are replicated, transcribed and translated. In addition, Nsp12 is a subunit of the viral RNA capping enzyme that catalyzes the RNA guanylyltransferase reaction for genomic and sub-genomic RNAs. Subsequently, the NiRAN domain transfers RNA to GDP, and forms the core cap structure GpppA-RNA. Its function is as follows. Multi-functional protein with a zinc-binding domain in N-terminus displaying RNA and DNA duplex-unwinding activities with 5' to 3' polarity. Activity of helicase is dependent on magnesium. In terms of biological role, plays a role in viral RNA synthesis through two distinct activities. The N7-guanine methyltransferase activity plays a role in the formation of the cap structure GpppA-RNA. The proofreading exoribonuclease reduces the sensitivity of the virus to RNA mutagens during replication. This activity acts on both ssRNA and dsRNA in a 3'-5' direction. Functionally, plays a role in viral transcription/replication and prevents the simultaneous activation of host cell dsRNA sensors, such as MDA5/IFIH1, OAS, and PKR. Acts by degrading the 5'-polyuridines generated during replication of the poly(A) region of viral genomic and subgenomic RNAs. Catalyzes a two-step reaction in which a 2'3'-cyclic phosphate (2'3'-cP) is first generated by 2'-O transesterification, which is then hydrolyzed to a 3'-phosphate (3'-P). If not degraded, poly(U) RNA would hybridize with poly(A) RNA tails and activate host dsRNA sensors. 2'-O-methyltransferase: Methyltransferase that mediates mRNA cap 2'-O-ribose methylation to the 5'-cap structure of viral mRNAs. N7-methyl guanosine cap is a prerequisite for binding of nsp16. Therefore plays an essential role in viral mRNAs cap methylation which is essential to evade immune system. This is Replicase polyprotein 1ab (rep) from Mus musculus (Mouse).